A 153-amino-acid polypeptide reads, in one-letter code: Ribosome maturation factor RimP (153 aa).

This sequence belongs to the RimP family.

It is found in the cytoplasm. Required for maturation of 30S ribosomal subunits. This chain is Ribosome maturation factor RimP, found in Marinobacter nauticus (strain ATCC 700491 / DSM 11845 / VT8) (Marinobacter aquaeolei).